The sequence spans 205 residues: MSDPRLSLVAAARKFYQLGWMLGTAGNLSAKVDDHSFWITASGKSKGKLTEQDFVRVELTGKVRELAHRDNRPSAETSIHQVIYCLFPQAQACYHVHSVEANLVSRFARGDKLSLPPLEMLKGLGIWVENPQVFMPVFANYLDVPKIAAEIESRFSTFPPEIPALLISYHGVTVWGESLETTENYLEIVEYIFRYLVAAYQVKPC.

Zn(2+) is bound by residues histidine 95 and histidine 97.

The protein belongs to the aldolase class II family. MtnB subfamily. It depends on Zn(2+) as a cofactor.

It carries out the reaction 5-(methylsulfanyl)-D-ribulose 1-phosphate = 5-methylsulfanyl-2,3-dioxopentyl phosphate + H2O. It functions in the pathway amino-acid biosynthesis; L-methionine biosynthesis via salvage pathway; L-methionine from S-methyl-5-thio-alpha-D-ribose 1-phosphate: step 2/6. Functionally, catalyzes the dehydration of methylthioribulose-1-phosphate (MTRu-1-P) into 2,3-diketo-5-methylthiopentyl-1-phosphate (DK-MTP-1-P). This Microcystis aeruginosa (strain NIES-843 / IAM M-2473) protein is Methylthioribulose-1-phosphate dehydratase.